Reading from the N-terminus, the 33-residue chain is Toxin BcV (33 aa).

A disulfide bridge links Cys6 with Cys30.

Its subcellular location is the secreted. It is found in the nematocyst. Functionally, potently and reversibly blocks mammalian Kv11/KCNH/ERG voltage-gated potassium channels. Acts as a gating-modifier toxin that shifts the voltage-dependence of ERG activation in the positive direction and suppresses its current amplitudes elicited by strong depolarizing pulses that maximally activate the channels. This is Toxin BcV from Bunodosoma caissarum (Sea anemone).